The primary structure comprises 350 residues: tRNA N6-adenosine threonylcarbamoyltransferase (350 aa).

Residues His109 and His113 each contribute to the Fe cation site. Residues 136-140, Asp169, Gly182, Asp186, and Asn284 each bind substrate; that span reads TVSGG. Residue Asp312 participates in Fe cation binding.

It belongs to the KAE1 / TsaD family. Requires Fe(2+) as cofactor.

The protein localises to the cytoplasm. The enzyme catalyses L-threonylcarbamoyladenylate + adenosine(37) in tRNA = N(6)-L-threonylcarbamoyladenosine(37) in tRNA + AMP + H(+). Its function is as follows. Required for the formation of a threonylcarbamoyl group on adenosine at position 37 (t(6)A37) in tRNAs that read codons beginning with adenine. Is involved in the transfer of the threonylcarbamoyl moiety of threonylcarbamoyl-AMP (TC-AMP) to the N6 group of A37, together with TsaE and TsaB. TsaD likely plays a direct catalytic role in this reaction. This chain is tRNA N6-adenosine threonylcarbamoyltransferase, found in Pelodictyon phaeoclathratiforme (strain DSM 5477 / BU-1).